Consider the following 292-residue polypeptide: Pyridoxal 5'-phosphate synthase subunit PdxS (292 aa).

Asp-22 lines the D-ribose 5-phosphate pocket. The active-site Schiff-base intermediate with D-ribose 5-phosphate is the Lys-79. Gly-151 contacts D-ribose 5-phosphate. Position 163 (Arg-163) interacts with D-glyceraldehyde 3-phosphate. Residues Gly-212 and 233–234 (GS) each bind D-ribose 5-phosphate.

It belongs to the PdxS/SNZ family. As to quaternary structure, in the presence of PdxT, forms a dodecamer of heterodimers.

The catalysed reaction is aldehydo-D-ribose 5-phosphate + D-glyceraldehyde 3-phosphate + L-glutamine = pyridoxal 5'-phosphate + L-glutamate + phosphate + 3 H2O + H(+). It functions in the pathway cofactor biosynthesis; pyridoxal 5'-phosphate biosynthesis. Functionally, catalyzes the formation of pyridoxal 5'-phosphate from ribose 5-phosphate (RBP), glyceraldehyde 3-phosphate (G3P) and ammonia. The ammonia is provided by the PdxT subunit. Can also use ribulose 5-phosphate and dihydroxyacetone phosphate as substrates, resulting from enzyme-catalyzed isomerization of RBP and G3P, respectively. This chain is Pyridoxal 5'-phosphate synthase subunit PdxS, found in Caldanaerobacter subterraneus subsp. tengcongensis (strain DSM 15242 / JCM 11007 / NBRC 100824 / MB4) (Thermoanaerobacter tengcongensis).